The chain runs to 413 residues: Serine hydroxymethyltransferase (413 aa).

(6S)-5,6,7,8-tetrahydrofolate contacts are provided by residues Leu117 and 121-123 (GHL). Lys226 carries the N6-(pyridoxal phosphate)lysine modification. Residues Glu241 and 349–351 (SPF) each bind (6S)-5,6,7,8-tetrahydrofolate.

Belongs to the SHMT family. As to quaternary structure, homodimer. Pyridoxal 5'-phosphate is required as a cofactor.

The protein localises to the cytoplasm. The enzyme catalyses (6R)-5,10-methylene-5,6,7,8-tetrahydrofolate + glycine + H2O = (6S)-5,6,7,8-tetrahydrofolate + L-serine. Its pathway is one-carbon metabolism; tetrahydrofolate interconversion. It functions in the pathway amino-acid biosynthesis; glycine biosynthesis; glycine from L-serine: step 1/1. In terms of biological role, catalyzes the reversible interconversion of serine and glycine with tetrahydrofolate (THF) serving as the one-carbon carrier. This reaction serves as the major source of one-carbon groups required for the biosynthesis of purines, thymidylate, methionine, and other important biomolecules. Also exhibits THF-independent aldolase activity toward beta-hydroxyamino acids, producing glycine and aldehydes, via a retro-aldol mechanism. The sequence is that of Serine hydroxymethyltransferase from Halalkalibacterium halodurans (strain ATCC BAA-125 / DSM 18197 / FERM 7344 / JCM 9153 / C-125) (Bacillus halodurans).